The sequence spans 292 residues: Protein LRATD1 (292 aa).

Serine 38 is modified (phosphoserine). The LRAT domain maps to 133 to 228 (PATEQPAPAP…CRFGKREFKA (96 aa)).

The protein belongs to the LRATD family.

It localises to the cytoplasm. Functionally, may play a role in cell morphology and motility. The protein is Protein LRATD1 of Mus musculus (Mouse).